The following is a 264-amino-acid chain: Carbonic anhydrase 7 (264 aa).

An Alpha-carbonic anhydrase domain is found at 5 to 262 (HGWGYGQDDG…LKGRVVKASF (258 aa)). His-66 functions as the Proton donor/acceptor in the catalytic mechanism. Zn(2+) contacts are provided by His-96, His-98, and His-121. 201–202 (TT) provides a ligand contact to substrate.

The protein belongs to the alpha-carbonic anhydrase family. Requires Zn(2+) as cofactor.

The protein resides in the cytoplasm. The enzyme catalyses hydrogencarbonate + H(+) = CO2 + H2O. Activated by histamine, L-adrenaline, L- and D-histidine, and L- and D-phenylalanine. Inhibited by coumarins, sulfonamide derivatives such as acetazolamide (AZA), by saccharin and Foscarnet (phosphonoformate trisodium salt). Its function is as follows. Reversible hydration of carbon dioxide. This is Carbonic anhydrase 7 (CA7) from Homo sapiens (Human).